The chain runs to 117 residues: MNNYETVFILTPVLSDAQMKEAVDKFTGLLKQEGAVIVNEENWGLRKLAYPIQKKSTGFYQLVEFQANPDVIAKLETNFRRDERVIRFLTFRQDKFAAEYAAKRRSLKAKTEEVKEA.

Belongs to the bacterial ribosomal protein bS6 family.

In terms of biological role, binds together with bS18 to 16S ribosomal RNA. This Porphyromonas gingivalis (strain ATCC BAA-308 / W83) protein is Small ribosomal subunit protein bS6.